The chain runs to 94 residues: ESAT-6-like protein EsxL (94 aa).

It belongs to the WXG100 family. ESAT-6 subfamily. Strongly interacts with EsxK to form a heterodimeric complex under reducing conditions.

The protein localises to the secreted. The protein is ESAT-6-like protein EsxL of Mycobacterium tuberculosis (strain CDC 1551 / Oshkosh).